We begin with the raw amino-acid sequence, 337 residues long: Lipoyl synthase (337 aa).

C81, C86, C92, C107, C111, C114, and S323 together coordinate [4Fe-4S] cluster. Positions 93–312 (FSHGTATFMI…EEYGNALGFS (220 aa)) constitute a Radical SAM core domain.

Belongs to the radical SAM superfamily. Lipoyl synthase family. Requires [4Fe-4S] cluster as cofactor.

Its subcellular location is the cytoplasm. It catalyses the reaction [[Fe-S] cluster scaffold protein carrying a second [4Fe-4S](2+) cluster] + N(6)-octanoyl-L-lysyl-[protein] + 2 oxidized [2Fe-2S]-[ferredoxin] + 2 S-adenosyl-L-methionine + 4 H(+) = [[Fe-S] cluster scaffold protein] + N(6)-[(R)-dihydrolipoyl]-L-lysyl-[protein] + 4 Fe(3+) + 2 hydrogen sulfide + 2 5'-deoxyadenosine + 2 L-methionine + 2 reduced [2Fe-2S]-[ferredoxin]. Its pathway is protein modification; protein lipoylation via endogenous pathway; protein N(6)-(lipoyl)lysine from octanoyl-[acyl-carrier-protein]: step 2/2. Catalyzes the radical-mediated insertion of two sulfur atoms into the C-6 and C-8 positions of the octanoyl moiety bound to the lipoyl domains of lipoate-dependent enzymes, thereby converting the octanoylated domains into lipoylated derivatives. In Xanthomonas campestris pv. campestris (strain 8004), this protein is Lipoyl synthase.